The following is a 504-amino-acid chain: L-carnitine/gamma-butyrobetaine antiporter (504 aa).

The next 12 helical transmembrane spans lie at 10 to 30 (IEPK…WLTV), 51 to 71 (WGWA…WLVF), 92 to 112 (IFMM…SIEI), 143 to 163 (GPLP…FFFV), 195 to 215 (FYLV…TPLV), 231 to 251 (LDAI…ACGL), 263 to 283 (SYLS…SFIM), 316 to 336 (WTVF…IFLA), 347 to 367 (LCFG…TVLG), 398 to 418 (WAAL…CFIA), 446 to 466 (LLVR…LLAL), and 475 to 495 (AIIA…LSFI).

It belongs to the BCCT transporter (TC 2.A.15) family. CaiT subfamily. Homotrimer.

Its subcellular location is the cell inner membrane. It catalyses the reaction 4-(trimethylamino)butanoate(in) + (R)-carnitine(out) = 4-(trimethylamino)butanoate(out) + (R)-carnitine(in). It functions in the pathway amine and polyamine metabolism; carnitine metabolism. In terms of biological role, catalyzes the exchange of L-carnitine for gamma-butyrobetaine. The chain is L-carnitine/gamma-butyrobetaine antiporter from Escherichia coli (strain K12 / MC4100 / BW2952).